The chain runs to 507 residues: Arabinose import ATP-binding protein AraG (507 aa).

2 consecutive ABC transporter domains span residues 14–249 (LRFN…MVGR) and 249–505 (RDIQ…LPRT). 46–53 (GENGAGKS) contributes to the ATP binding site.

Belongs to the ABC transporter superfamily. Arabinose importer (TC 3.A.1.2.2) family. In terms of assembly, the complex is composed of two ATP-binding proteins (AraG), two transmembrane proteins (AraH) and a solute-binding protein (AraF).

The protein localises to the cell inner membrane. It catalyses the reaction L-arabinose(out) + ATP + H2O = L-arabinose(in) + ADP + phosphate + H(+). Part of the ABC transporter complex AraFGH involved in arabinose import. Responsible for energy coupling to the transport system. This is Arabinose import ATP-binding protein AraG from Pseudomonas syringae pv. tomato (strain ATCC BAA-871 / DC3000).